The sequence spans 631 residues: Cyclic nucleotide-gated channel alpha-3 (631 aa).

Positions 1 to 18 (MAKVNTQCSQPSPTQLSI) are enriched in polar residues. Disordered regions lie at residues 1-21 (MAKV…IKNA) and 71-98 (EVST…RKEE). Topologically, residues 1–111 (MAKVNTQCSQ…VDPSSNIYYR (111 aa)) are cytoplasmic. A compositionally biased stretch (basic and acidic residues) spans 87–98 (KPPDGGEGRKEE). Residues 112–133 (WLTAIALPVFYNWCLLVCRACF) traverse the membrane as a helical segment. The Extracellular segment spans residues 134-139 (DELQSE). The helical transmembrane segment at 140 to 160 (HLTLWLVLDYSADVLYVLDML) threads the bilayer. Topologically, residues 161–187 (VRARTGFLEQGLMVRDTKRLWKHYTKT) are cytoplasmic. The chain crosses the membrane as a helical span at residues 188–207 (LHFKLDILSLIPTDLAYLKL). The Extracellular portion of the chain corresponds to 208-211 (GVNY). A helical transmembrane segment spans residues 212–229 (PELRFNRLLKFSRLFEFF). The Cytoplasmic segment spans residues 230-239 (DRTETRTNYP). Positions 239–347 (PNVFRIGNLV…GNVGSMISNM (109 aa)) are ion conduction pathway. The chain crosses the membrane as a helical span at residues 240–262 (NVFRIGNLVLYTLIIIHWNACIY). Topologically, residues 263–288 (FAISKFIGFGTDSWVYPNTSKPEYAR) are extracellular. Asparagine 280 carries an N-linked (GalNAc...) asparagine glycan. A run of 2 helical transmembrane segments spans residues 289–319 (LSRK…DEEY) and 320–344 (LFVV…GSMI). The tract at residues 306–309 (TIGE) is selectivity filter. The Cytoplasmic segment spans residues 345–631 (SNMNAPRVEF…ENSEDASKTD (287 aa)). The C-linker stretch occupies residues 349–426 (APRVEFQAKI…TLKKVRIFQD (78 aa)). Positions 429–549 (AGLLVELVLK…EEKGRQILMK (121 aa)) are cyclic nucleotide-binding domain. Residues glycine 489, glutamate 490, serine 492, arginine 505, threonine 506, and aspartate 550 each coordinate 3',5'-cyclic GMP. Residues 567-610 (VEEKVEYLESSLDILQTRFARLLAEYSASQMKLKQRLTRLESQM) adopt a coiled-coil conformation.

It belongs to the cyclic nucleotide-gated cation channel (TC 1.A.1.5) family. CNGA3 subfamily. Forms heterotetrameric channels composed of CNGA3 and CNGB3 subunits with 3:1 stoichiometry. In terms of tissue distribution, prominently expressed in retina.

It is found in the cell membrane. The enzyme catalyses Ca(2+)(in) = Ca(2+)(out). It catalyses the reaction Na(+)(in) = Na(+)(out). It carries out the reaction K(+)(in) = K(+)(out). The catalysed reaction is NH4(+)(in) = NH4(+)(out). The enzyme catalyses Rb(+)(in) = Rb(+)(out). It catalyses the reaction Li(+)(in) = Li(+)(out). It carries out the reaction Cs(+)(in) = Cs(+)(out). Functionally, pore-forming subunit of the cone cyclic nucleotide-gated channel. Mediates cone photoresponses at bright light converting transient changes in intracellular cGMP levels into electrical signals. In the dark, cGMP levels are high and keep the channel open enabling a steady inward current carried by Na(+) and Ca(2+) ions that leads to membrane depolarization and neurotransmitter release from synaptic terminals. Upon photon absorption cGMP levels decline leading to channel closure and membrane hyperpolarization that ultimately slows neurotransmitter release and signals the presence of light, the end point of the phototransduction cascade. Pore-forming subunit of the gustatory cyclic nucleotide-gated channel. In the taste buds, may sense oral extracellular pH and conduct ion currents that modulate the excitability of taste cells. Conducts cGMP- and cAMP-gated ion currents, with permeability for monovalent and divalent cations. In Mus musculus (Mouse), this protein is Cyclic nucleotide-gated channel alpha-3.